The chain runs to 1074 residues: DNA double-strand break repair Rad50 ATPase (1074 aa).

Residues Arg12, Asn32–Ser38, and Gln142 each bind ATP. 2 coiled-coil regions span residues Glu355 to Ala402 and Asn452 to Gly506. In terms of domain architecture, Zinc-hook spans Leu512–Lys611. Zn(2+) contacts are provided by Cys559 and Cys562. Coiled-coil stretches lie at residues Thr574–Lys611, Leu649–Gln678, Lys749–Glu823, and Thr865–Leu895. Leu973–Glu978 contributes to the ATP binding site.

The protein belongs to the SMC family. RAD50 subfamily. In terms of assembly, homodimer. Forms a heterotetramer composed of two Mre11 subunits and two Rad50 subunits. The cofactor is Zn(2+).

Part of the Rad50/Mre11 complex, which is involved in the early steps of DNA double-strand break (DSB) repair. The complex may facilitate opening of the processed DNA ends to aid in the recruitment of HerA and NurA. Rad50 controls the balance between DNA end bridging and DNA resection via ATP-dependent structural rearrangements of the Rad50/Mre11 complex. The polypeptide is DNA double-strand break repair Rad50 ATPase (Methanosarcina acetivorans (strain ATCC 35395 / DSM 2834 / JCM 12185 / C2A)).